A 159-amino-acid chain; its full sequence is ATP synthase subunit b (159 aa).

A helical transmembrane segment spans residues 7–27; that stretch reads TFVWTIINFLLLLVVLSYFLF.

The protein belongs to the ATPase B chain family. As to quaternary structure, F-type ATPases have 2 components, F(1) - the catalytic core - and F(0) - the membrane proton channel. F(1) has five subunits: alpha(3), beta(3), gamma(1), delta(1), epsilon(1). F(0) has three main subunits: a(1), b(2) and c(10-14). The alpha and beta chains form an alternating ring which encloses part of the gamma chain. F(1) is attached to F(0) by a central stalk formed by the gamma and epsilon chains, while a peripheral stalk is formed by the delta and b chains.

Its subcellular location is the cell membrane. Its function is as follows. F(1)F(0) ATP synthase produces ATP from ADP in the presence of a proton or sodium gradient. F-type ATPases consist of two structural domains, F(1) containing the extramembraneous catalytic core and F(0) containing the membrane proton channel, linked together by a central stalk and a peripheral stalk. During catalysis, ATP synthesis in the catalytic domain of F(1) is coupled via a rotary mechanism of the central stalk subunits to proton translocation. Functionally, component of the F(0) channel, it forms part of the peripheral stalk, linking F(1) to F(0). The protein is ATP synthase subunit b of Clostridium novyi (strain NT).